Consider the following 270-residue polypeptide: Putative F-box protein At3g24700 (270 aa).

The F-box domain occupies 1–45 (MLTDLPLDLESEILSRVPATSLQRLKTTCKRWYALFRDPRFVKKN).

This chain is Putative F-box protein At3g24700, found in Arabidopsis thaliana (Mouse-ear cress).